The following is a 157-amino-acid chain: C-type lectin 9a (157 aa).

A signal peptide spans 1 to 23; it reads MGRFIFVSFGLLVVFLSLSGTGA. 3 disulfide bridges follow: Cys-27–Cys-38, Cys-55–Cys-151, and Cys-126–Cys-143. Residues 34 to 152 enclose the C-type lectin domain; the sequence is YDQYCYKPFN…CQAKKPFVCK (119 aa).

It belongs to the snaclec family. In terms of assembly, heteromultimer; disulfide-linked. In terms of tissue distribution, expressed by the venom gland.

Its subcellular location is the secreted. Functionally, interferes with one step of hemostasis (modulation of platelet aggregation, or coagulation cascade, for example). The chain is C-type lectin 9a from Crotalus adamanteus (Eastern diamondback rattlesnake).